Reading from the N-terminus, the 230-residue chain is Ribose-5-phosphate isomerase A (230 aa).

Substrate contacts are provided by residues 29–32, 85–88, and 99–102; these read TGST, DGAD, and KGAG. E108 (proton acceptor) is an active-site residue. Residue K126 coordinates substrate.

This sequence belongs to the ribose 5-phosphate isomerase family. As to quaternary structure, homodimer.

It catalyses the reaction aldehydo-D-ribose 5-phosphate = D-ribulose 5-phosphate. The protein operates within carbohydrate degradation; pentose phosphate pathway; D-ribose 5-phosphate from D-ribulose 5-phosphate (non-oxidative stage): step 1/1. In terms of biological role, catalyzes the reversible conversion of ribose-5-phosphate to ribulose 5-phosphate. This chain is Ribose-5-phosphate isomerase A, found in Synechococcus sp. (strain JA-3-3Ab) (Cyanobacteria bacterium Yellowstone A-Prime).